Consider the following 356-residue polypeptide: MELLLQKGANALGQASDSSSILLEAASGGNPDSVTLLLEYGADANVPKNSGHLPIHVAADRGHLLALKTLVPVTDFAAIKRSGISPIHCAAAGAHPKCLELLIQAGFDVNFMLDQRIRKHYDDHRKSALYFAVSNGDLSSVKLLLSAGAMPNQDPVNCLQIALRMGNYELVSLLLRHGANVNYFCRVNPLHFPSALQYTLKDEVMLRMLLNYGYDTELCFDCPHGDKVHRFSASEGWTSTVIKDTMFCEVITLSWLQHLSGKVVRVMLDYVDQVRICSKLKAVLQKQGLWSEIHFILTNPRSLKHLCRLKIRKCMGRLRLRCPVFMSFLPLPSRLKAYVLYKEYDLYEQGIFTGTW.

6 ANK repeats span residues 17 to 46 (DSSS…DANV), 50 to 81 (SGHL…AIKR), 82 to 111 (SGIS…DVNF), 124 to 153 (HRKS…MPNQ), 154 to 183 (DPVN…NVNY), and 185 to 218 (CRVN…DTEL). Positions 290 to 345 (WSEIHFILTNPRSLKHLCRLKIRKCMGRLRLRCPVFMSFLPLPSRLKAYVLYKEYD) constitute an SOCS box domain.

The protein belongs to the dynein heavy chain family. As to quaternary structure, consists of at least two heavy chains and a number of intermediate and light chains.

Its subcellular location is the cytoplasm. It is found in the cytoskeleton. The protein localises to the cilium axoneme. The protein operates within protein modification; protein ubiquitination. In terms of biological role, force generating protein of respiratory cilia. Produces force towards the minus ends of microtubules. Dynein has ATPase activity; the force-producing power stroke is thought to occur on release of ADP. Involved in sperm motility; implicated in sperm flagellar assembly. Functionally, may be a substrate-recognition component of a SCF-like ECS (Elongin-Cullin-SOCS-box protein) E3 ubiquitin-protein ligase complex which mediates the ubiquitination and subsequent proteasomal degradation of target proteins. This is Dynein axonemal heavy chain 12 (DNAH12) from Bos taurus (Bovine).